We begin with the raw amino-acid sequence, 173 residues long: Crossover junction endodeoxyribonuclease RuvC (173 aa).

Catalysis depends on residues D8, E67, and D139. Mg(2+) contacts are provided by D8, E67, and D139.

It belongs to the RuvC family. Homodimer which binds Holliday junction (HJ) DNA. The HJ becomes 2-fold symmetrical on binding to RuvC with unstacked arms; it has a different conformation from HJ DNA in complex with RuvA. In the full resolvosome a probable DNA-RuvA(4)-RuvB(12)-RuvC(2) complex forms which resolves the HJ. The cofactor is Mg(2+).

It localises to the cytoplasm. It catalyses the reaction Endonucleolytic cleavage at a junction such as a reciprocal single-stranded crossover between two homologous DNA duplexes (Holliday junction).. Functionally, the RuvA-RuvB-RuvC complex processes Holliday junction (HJ) DNA during genetic recombination and DNA repair. Endonuclease that resolves HJ intermediates. Cleaves cruciform DNA by making single-stranded nicks across the HJ at symmetrical positions within the homologous arms, yielding a 5'-phosphate and a 3'-hydroxyl group; requires a central core of homology in the junction. The consensus cleavage sequence is 5'-(A/T)TT(C/G)-3'. Cleavage occurs on the 3'-side of the TT dinucleotide at the point of strand exchange. HJ branch migration catalyzed by RuvA-RuvB allows RuvC to scan DNA until it finds its consensus sequence, where it cleaves and resolves the cruciform DNA. The chain is Crossover junction endodeoxyribonuclease RuvC from Vibrio campbellii (strain ATCC BAA-1116).